Consider the following 478-residue polypeptide: Cysteine--tRNA ligase (478 aa).

Cys-37 lines the Zn(2+) pocket. The short motif at 39–49 (PTVYHYAHIGN) is the 'HIGH' region element. Zn(2+) is bound by residues Cys-224, His-249, and Glu-253. Positions 281–285 (KMSKS) match the 'KMSKS' region motif. Residue Lys-284 coordinates ATP.

Belongs to the class-I aminoacyl-tRNA synthetase family. In terms of assembly, monomer. Requires Zn(2+) as cofactor.

The protein resides in the cytoplasm. It carries out the reaction tRNA(Cys) + L-cysteine + ATP = L-cysteinyl-tRNA(Cys) + AMP + diphosphate. The sequence is that of Cysteine--tRNA ligase from Protochlamydia amoebophila (strain UWE25).